The following is a 53-amino-acid chain: Small polypeptide DEVIL 16 (53 aa).

Residue Asn6 is glycosylated (N-linked (GlcNAc...) asparagine). Residues 14–45 form a required for DVL/RTFL small polypeptide activity region; it reads TFGQKCSHVVKKQRAKFYILRRCIAMLVCWHD. A helical transmembrane segment spans residues 30-46; the sequence is FYILRRCIAMLVCWHDQ.

It belongs to the DVL/RTFL small polypeptides family. Mostly expressed in stems, flower buds, flowers and seedling shoots, to a lesser extent, in roots and young cauline leaves, but not in mature rosette leaves. Barely observed in cotyledons and leaf primordia.

Its subcellular location is the cell membrane. In terms of biological role, small polypeptide acting as a regulatory molecule which coordinates cellular responses required for differentiation, growth and development, probably by restricting polar cell proliferation in lateral organs (e.g. leaves) and coordinating socket cell recruitment and differentiation at trichome sites. Regulates the positional cue and cell proliferation along the body axis. This Arabidopsis thaliana (Mouse-ear cress) protein is Small polypeptide DEVIL 16.